The sequence spans 1403 residues: Centrosomal protein of 162 kDa (1403 aa).

A disordered region spans residues 20 to 46; that stretch reads LSDDSFENSNKTPRQPNEDNKEMKKKD. Positions 35 to 46 are enriched in basic and acidic residues; that stretch reads PNEDNKEMKKKD. Phosphoserine is present on residues serine 160 and serine 163. Disordered regions lie at residues 169–243, 256–292, 306–348, and 453–606; these read LHRY…MLAN, VGLSSQEKATPKAKAPPEITDDGPAETGVPYGQSSGD, SLGD…ESDL, and NPSL…GGNR. Residues 178–208 show a composition bias toward acidic residues; that stretch reads PAEDGCENESEQEELPETYSDDFEDAEDADD. Over residues 210-238 the composition is skewed to basic and acidic residues; that stretch reads LITKDEETHPKENSESGKDSFPKQEEEKT. The span at 485–500 shows a compositional bias: basic residues; it reads PCKKARSTPSLPKRKP. Basic and acidic residues-rich tracts occupy residues 526–536 and 571–585; these read LEKKTSKDNTK and PHREGSPATPKRPED. Positions 614 to 1124 form a coiled coil; that stretch reads KRAQDAEEKW…QKERRMMLSR (511 aa). A disordered region spans residues 1126-1147; that stretch reads IPRSREETAAKRLKKDPNRGHG. Basic and acidic residues predominate over residues 1128–1144; it reads RSREETAAKRLKKDPNR. Residues 1174-1386 are a coiled coil; that stretch reads EENYRLRSEL…LDVLRELHRQ (213 aa).

It belongs to the CEP162 family. As to quaternary structure, interacts with CPNE4. Interacts with alpha-tubulin. Interacts with CEP290.

The protein localises to the cytoplasm. It localises to the cytoskeleton. It is found in the microtubule organizing center. The protein resides in the centrosome. Its subcellular location is the centriole. The protein localises to the spindle. It localises to the nucleus. Required to promote assembly of the transition zone in primary cilia. Acts by specifically recognizing and binding the axonemal microtubule. Localizes to the distal ends of centrioles before ciliogenesis and directly binds to axonemal microtubule, thereby promoting and restricting transition zone formation specifically at the cilia base. Required to mediate CEP290 association with microtubules. The protein is Centrosomal protein of 162 kDa (Cep162) of Mus musculus (Mouse).